The following is a 333-amino-acid chain: Thiamine-monophosphate kinase (333 aa).

The Mg(2+) site is built by D44, S58, T59, and D60. Residue H67 coordinates substrate. Residues D89 and D137 each contribute to the Mg(2+) site. ATP is bound by residues 136 to 137 (GD) and R162. Residue D224 coordinates Mg(2+). S226 is a binding site for ATP. D227 provides a ligand contact to Mg(2+). Residues E278 and W320 each contribute to the substrate site.

It belongs to the thiamine-monophosphate kinase family.

It catalyses the reaction thiamine phosphate + ATP = thiamine diphosphate + ADP. The protein operates within cofactor biosynthesis; thiamine diphosphate biosynthesis; thiamine diphosphate from thiamine phosphate: step 1/1. Its function is as follows. Catalyzes the ATP-dependent phosphorylation of thiamine-monophosphate (TMP) to form thiamine-pyrophosphate (TPP), the active form of vitamin B1. In Mycobacterium tuberculosis (strain CDC 1551 / Oshkosh), this protein is Thiamine-monophosphate kinase.